A 399-amino-acid chain; its full sequence is Proteasome-activating nucleotidase (399 aa).

Positions 19-60 form a coiled coil; sequence ITYLKRRIRQLELQVRMLEADKERLERELSRLRSEMSRLRQP. ATP is bound by residues 184 to 189 and histidine 323; that span reads GCGKTL. The tract at residues 397 to 399 is docks into pockets in the proteasome alpha-ring to cause gate opening; the sequence is IYG.

It belongs to the AAA ATPase family. Homohexamer. The hexameric complex has a two-ring architecture resembling a top hat that caps the 20S proteasome core at one or both ends. Upon ATP-binding, the C-terminus of PAN interacts with the alpha-rings of the proteasome core by binding to the intersubunit pockets.

It localises to the cytoplasm. Its function is as follows. ATPase which is responsible for recognizing, binding, unfolding and translocation of substrate proteins into the archaeal 20S proteasome core particle. Is essential for opening the gate of the 20S proteasome via an interaction with its C-terminus, thereby allowing substrate entry and access to the site of proteolysis. Thus, the C-termini of the proteasomal ATPase function like a 'key in a lock' to induce gate opening and therefore regulate proteolysis. Unfolding activity requires energy from ATP hydrolysis, whereas ATP binding alone promotes ATPase-20S proteasome association which triggers gate opening, and supports translocation of unfolded substrates. The sequence is that of Proteasome-activating nucleotidase from Pyrococcus horikoshii (strain ATCC 700860 / DSM 12428 / JCM 9974 / NBRC 100139 / OT-3).